A 204-amino-acid chain; its full sequence is MRLRKTRKIVVSMKDMAASGGYYIASSADKIFALSGTITGSIGVLQWLRYQRAFGSLGVKMRTYKEGKYKDSLSLFRDSTPEEDEMIQKMLSDTYNEFVQDVAKGRNQTVKSVQNLAEGRIYSGQDAFRNKLVDEIGGRKEALEELSRLCQYDGEIPLYEEEESPFDRLFMMLGSKMNSFSSERIFFREFKNSPVLVILPQAIR.

A signal peptide spans 1 to 27 (MRLRKTRKIVVSMKDMAASGGYYIASS). The active-site Nucleophile is the Ser19. The active-site Proton donor/acceptor is Lys70.

It belongs to the peptidase S49 family.

Its function is as follows. Possible protease. May be involved in export of periplasmic flagella proteins. This Leptospira borgpetersenii protein is Putative peptidase PfaP (pfaP).